The chain runs to 523 residues: FAD:protein FMN transferase (523 aa).

3 helical membrane-spanning segments follow: residues 88–108 (LLAG…VALA), 118–138 (GGAA…LVLL), and 169–189 (GLAL…TAPA). Residues 277–279 (LFD) and Asp-336 contribute to the FAD site. Mg(2+) is bound at residue Ala-339. Residues Lys-342 and 423–425 (HII) each bind FAD. Positions 450 and 454 each coordinate Mg(2+).

This sequence in the N-terminal section; belongs to the RseC family. The protein in the C-terminal section; belongs to the ApbE family. It depends on Mg(2+) as a cofactor.

The protein localises to the cell membrane. The enzyme catalyses L-threonyl-[protein] + FAD = FMN-L-threonyl-[protein] + AMP + H(+). In terms of biological role, flavin transferase that catalyzes the transfer of the FMN moiety of FAD and its covalent binding to the hydroxyl group of a threonine residue in a target flavoprotein. Is likely involved in the modification of RnfG and RnfD. Required for nitrogen fixation. The polypeptide is FAD:protein FMN transferase (Rhodobacter capsulatus (Rhodopseudomonas capsulata)).